We begin with the raw amino-acid sequence, 469 residues long: Glutamine synthetase (469 aa).

A GS beta-grasp domain is found at 12–97; that stretch reads HDVKWVDLRF…LVCDIIEPST (86 aa). Positions 105-469 constitute a GS catalytic domain; that stretch reads PRNIAKRAEE…PLEYDLYYSV (365 aa). The Mg(2+) site is built by glutamate 130 and glutamate 132. Glutamate 208 is a binding site for ATP. The Mg(2+) site is built by glutamate 213 and glutamate 221. Residues 265-266 and glycine 266 each bind L-glutamate; that span reads NG. Histidine 270 provides a ligand contact to Mg(2+). Residues 272-274 and serine 274 each bind ATP; that span reads HMS. Residues arginine 322, glutamate 328, and arginine 340 each coordinate L-glutamate. Residues arginine 340, arginine 345, and lysine 353 each contribute to the ATP site. Glutamate 358 contacts Mg(2+). Residue arginine 360 participates in L-glutamate binding. Position 398 is an O-AMP-tyrosine (tyrosine 398).

Belongs to the glutamine synthetase family. Oligomer of 12 subunits arranged in the form of two hexameric ring. It depends on Mg(2+) as a cofactor.

It is found in the cytoplasm. It carries out the reaction L-glutamate + NH4(+) + ATP = L-glutamine + ADP + phosphate + H(+). Its activity is regulated as follows. The activity of this enzyme could be controlled by adenylation under conditions of abundant glutamine. Its function is as follows. Catalyzes the ATP-dependent biosynthesis of glutamine from glutamate and ammonia. The sequence is that of Glutamine synthetase from Pseudomonas aeruginosa (strain ATCC 15692 / DSM 22644 / CIP 104116 / JCM 14847 / LMG 12228 / 1C / PRS 101 / PAO1).